A 445-amino-acid polypeptide reads, in one-letter code: Serine/threonine-protein kinase Nek2 (445 aa).

Positions 8 to 271 (YEVLYTIGTG…VEEILENPLI (264 aa)) constitute a Protein kinase domain. ATP is bound by residues 14–22 (IGTGSYGRC) and Lys-37. Asp-141 acts as the Proton acceptor in catalysis. Thr-170 bears the Phosphothreonine; by autocatalysis mark. Ser-171 carries the phosphoserine; by autocatalysis modification. Residues Thr-175 and Thr-179 each carry the phosphothreonine; by autocatalysis modification. Residue Ser-184 is modified to Phosphoserine. A Phosphoserine; by autocatalysis modification is found at Ser-241. The interval 264–445 (EILENPLIAD…LKSRQILGMR (182 aa)) is interaction with PCNT. Ser-296 and Ser-300 each carry phosphoserine. Residues 301-445 (PVLSELKLKE…LKSRQILGMR (145 aa)) form an interaction with CEP85 region. Positions 303–362 (LSELKLKEIQLQERERALKAREERLEQKEQELCVRERLAEDKLARAENLLKNYSLLKERK) form a coiled coil. The segment at 306-334 (LKLKEIQLQERERALKAREERLEQKEQEL) is leucine-zipper. A necessary for interaction with MAD1L1 region spans residues 329-445 (QKEQELCVRE…LKSRQILGMR (117 aa)). The interval 333–370 (ELCVRERLAEDKLARAENLLKNYSLLKERKFLSLASNP) is required for microtubule binding and for localization to the centrosomes. A phosphoserine; by STK3/MST2 mark is found at Ser-356 and Ser-365. Phosphoserine occurs at positions 387, 390, 397, and 402. The tract at residues 403–439 (QLTSKSKCKDLKKRLHAAQLRAQALSDIEKNYQLKSR) is interaction with SAV1 and STK3/MST2. Ser-406 carries the phosphoserine; by STK3/MST2 modification. A coiled-coil region spans residues 406 to 430 (SKSKCKDLKKRLHAAQLRAQALSDI). Ser-428 carries the phosphoserine modification. Ser-438 is modified (phosphoserine; by STK3/MST2).

This sequence belongs to the protein kinase superfamily. NEK Ser/Thr protein kinase family. NIMA subfamily. Isoform 1, isoform 2 and isoform 4 form homo- and heterodimers. Interacts with NECAB3 and HMGA2. Isoform 1 interacts with CDC20, CTNB1, MAD1L1, MAPK, NEK11, NPM1, NDC80, PCNT and SGO1. Isoform 1 interacts with STK3/MST2 (via SARAH domain) and SAV1 (via SARAH domain). Isoform 1 and isoform 2 interact with MAD2L1. Isoform 1 and isoform 4 interact with PPP1CA and PPP1CC. Interacts with CEP68; the interaction leads to phosphorylation of CEP68. Interacts with CNTLN; the interaction leads to phosphorylation of CNTLN. Isoform 1 interacts with CEP85. Interacts with CCDC102B; the interaction leads to phosphorylation of CCDC102B. Requires Mg(2+) as cofactor. Post-translationally, activated by autophosphorylation. Protein phosphatase 1 represses autophosphorylation and activation of isoform 1 by dephosphorylation. Phosphorylation by STK3/MST2 is necessary for its localization to the centrosome. As to expression, isoform 1 and isoform 2 are expressed in peripheral blood T-cells and a wide variety of transformed cell types. Isoform 1 and isoform 4 are expressed in the testis. Up-regulated in various cancer cell lines, as well as primary breast tumors.

The protein localises to the nucleus. The protein resides in the nucleolus. It is found in the cytoplasm. It localises to the cytoskeleton. Its subcellular location is the microtubule organizing center. The protein localises to the centrosome. The protein resides in the spindle pole. It is found in the chromosome. It localises to the centromere. Its subcellular location is the kinetochore. The catalysed reaction is L-seryl-[protein] + ATP = O-phospho-L-seryl-[protein] + ADP + H(+). It carries out the reaction L-threonyl-[protein] + ATP = O-phospho-L-threonyl-[protein] + ADP + H(+). Its activity is regulated as follows. Isoform 1 is inhibited by ionizing radiation in the presence of PPP1CA. Its catalytic activity is inhibited by the inhibitor CCT241950. In the presence of this inhibitor, displays an autoinhibited conformation: Tyr-70 side chain points into the active site, interacts with the activation loop, and blocks the alphaC helix. Its function is as follows. Protein kinase which is involved in the control of centrosome separation and bipolar spindle formation in mitotic cells and chromatin condensation in meiotic cells. Regulates centrosome separation (essential for the formation of bipolar spindles and high-fidelity chromosome separation) by phosphorylating centrosomal proteins such as CROCC, CEP250 and NINL, resulting in their displacement from the centrosomes. Regulates kinetochore microtubule attachment stability in mitosis via phosphorylation of NDC80. Involved in regulation of mitotic checkpoint protein complex via phosphorylation of CDC20 and MAD2L1. Plays an active role in chromatin condensation during the first meiotic division through phosphorylation of HMGA2. Phosphorylates: PPP1CC; SGO1; NECAB3 and NPM1. Essential for localization of MAD2L1 to kinetochore and MAPK1 and NPM1 to the centrosome. Phosphorylates CEP68 and CNTLN directly or indirectly. NEK2-mediated phosphorylation of CEP68 promotes CEP68 dissociation from the centrosome and its degradation at the onset of mitosis. Involved in the regulation of centrosome disjunction. Phosphorylates CCDC102B either directly or indirectly which causes CCDC102B to dissociate from the centrosome and allows for centrosome separation. In terms of biological role, phosphorylates and activates NEK11 in G1/S-arrested cells. Not present in the nucleolus and, in contrast to isoform 1, does not phosphorylate and activate NEK11 in G1/S-arrested cells. This Homo sapiens (Human) protein is Serine/threonine-protein kinase Nek2 (NEK2).